The following is a 101-amino-acid chain: NADH-quinone oxidoreductase subunit K (101 aa).

3 helical membrane-spanning segments follow: residues 4–24 (LAHYLVLGAILFAIAIVGIFL), 29–49 (IIIILMAIELMLLAVNTNFVA), and 61–81 (IFVFFVLTVAAAEAAIGLAIL).

It belongs to the complex I subunit 4L family. In terms of assembly, NDH-1 is composed of 14 different subunits. Subunits NuoA, H, J, K, L, M, N constitute the membrane sector of the complex.

The protein resides in the cell inner membrane. It carries out the reaction a quinone + NADH + 5 H(+)(in) = a quinol + NAD(+) + 4 H(+)(out). NDH-1 shuttles electrons from NADH, via FMN and iron-sulfur (Fe-S) centers, to quinones in the respiratory chain. The immediate electron acceptor for the enzyme in this species is believed to be ubiquinone. Couples the redox reaction to proton translocation (for every two electrons transferred, four hydrogen ions are translocated across the cytoplasmic membrane), and thus conserves the redox energy in a proton gradient. This Burkholderia ambifaria (strain MC40-6) protein is NADH-quinone oxidoreductase subunit K.